The chain runs to 397 residues: Elongation factor Tu (397 aa).

Positions 10-207 (KPHLNIGTIG…AVDAYIPEPE (198 aa)) constitute a tr-type G domain. The segment at 19-26 (GHVDHGKT) is G1. 19 to 26 (GHVDHGKT) is a binding site for GTP. Threonine 26 lines the Mg(2+) pocket. Positions 60-64 (GVTIN) are G2. The interval 81–84 (DCPG) is G3. GTP is bound by residues 81 to 85 (DCPGH) and 136 to 139 (NKVD). Positions 136 to 139 (NKVD) are G4. A G5 region spans residues 174 to 176 (SAL).

It belongs to the TRAFAC class translation factor GTPase superfamily. Classic translation factor GTPase family. EF-Tu/EF-1A subfamily. In terms of assembly, monomer.

It localises to the cytoplasm. The catalysed reaction is GTP + H2O = GDP + phosphate + H(+). GTP hydrolase that promotes the GTP-dependent binding of aminoacyl-tRNA to the A-site of ribosomes during protein biosynthesis. This is Elongation factor Tu from Syntrophus aciditrophicus (strain SB).